The chain runs to 436 residues: Trigger factor (436 aa).

Residues 161–246 (DLRVNMDFVG…LNKVEKQDLP (86 aa)) form the PPIase FKBP-type domain.

It belongs to the FKBP-type PPIase family. Tig subfamily.

The protein localises to the cytoplasm. It carries out the reaction [protein]-peptidylproline (omega=180) = [protein]-peptidylproline (omega=0). Its function is as follows. Involved in protein export. Acts as a chaperone by maintaining the newly synthesized protein in an open conformation. Functions as a peptidyl-prolyl cis-trans isomerase. This Tolumonas auensis (strain DSM 9187 / NBRC 110442 / TA 4) protein is Trigger factor.